The following is a 310-amino-acid chain: Homoserine kinase (310 aa).

Position 91-101 (91-101 (PIGSGLGSSAC)) interacts with ATP.

Belongs to the GHMP kinase family. Homoserine kinase subfamily.

It is found in the cytoplasm. The enzyme catalyses L-homoserine + ATP = O-phospho-L-homoserine + ADP + H(+). Its pathway is amino-acid biosynthesis; L-threonine biosynthesis; L-threonine from L-aspartate: step 4/5. Catalyzes the ATP-dependent phosphorylation of L-homoserine to L-homoserine phosphate. This chain is Homoserine kinase, found in Escherichia coli (strain SMS-3-5 / SECEC).